The following is an 82-amino-acid chain: Hepcidin (82 aa).

Positions 1–23 (MALSVQIRAACLLLLLLVSLTAG) are cleaved as a signal peptide. Positions 24–53 (SVLPSQTRQLTDLRTQDTAGATAGLTPVAQ) are excised as a propeptide. 4 cysteine pairs are disulfide-bonded: Cys-64-Cys-80, Cys-67-Cys-70, Cys-68-Cys-76, and Cys-71-Cys-79.

The protein belongs to the hepcidin family. In terms of assembly, interacts with SLC40A1; this interaction promotes SLC40A1 rapid ubiquitination.

Its subcellular location is the secreted. Liver-produced hormone that constitutes the main circulating regulator of iron absorption and distribution across tissues. Acts by promoting endocytosis and degradation of ferroportin/SLC40A1, leading to the retention of iron in iron-exporting cells and decreased flow of iron into plasma. Controls the major flows of iron into plasma: absorption of dietary iron in the intestine, recycling of iron by macrophages, which phagocytose old erythrocytes and other cells, and mobilization of stored iron from hepatocytes. Functionally, has strong antimicrobial activity against E.coli ML35P N.cinerea and weaker against S.epidermidis, S.aureus and group b streptococcus bacteria. Active against the fungus C.albicans. No activity against P.aeruginosa. The protein is Hepcidin (HAMP) of Sus scrofa (Pig).